Here is a 499-residue protein sequence, read N- to C-terminus: Probable cytosol aminopeptidase (499 aa).

Lysine 267 and aspartate 272 together coordinate Mn(2+). Residue lysine 279 is part of the active site. Aspartate 290, aspartate 349, and glutamate 351 together coordinate Mn(2+). Arginine 353 is an active-site residue.

It belongs to the peptidase M17 family. Requires Mn(2+) as cofactor.

The protein resides in the cytoplasm. It catalyses the reaction Release of an N-terminal amino acid, Xaa-|-Yaa-, in which Xaa is preferably Leu, but may be other amino acids including Pro although not Arg or Lys, and Yaa may be Pro. Amino acid amides and methyl esters are also readily hydrolyzed, but rates on arylamides are exceedingly low.. The enzyme catalyses Release of an N-terminal amino acid, preferentially leucine, but not glutamic or aspartic acids.. Functionally, presumably involved in the processing and regular turnover of intracellular proteins. Catalyzes the removal of unsubstituted N-terminal amino acids from various peptides. In Buchnera aphidicola subsp. Acyrthosiphon pisum (strain Tuc7), this protein is Probable cytosol aminopeptidase.